Reading from the N-terminus, the 278-residue chain is Pyrroline-5-carboxylate reductase 2 (278 aa).

This sequence belongs to the pyrroline-5-carboxylate reductase family.

The protein localises to the cytoplasm. It catalyses the reaction L-proline + NADP(+) = (S)-1-pyrroline-5-carboxylate + NADPH + 2 H(+). The catalysed reaction is L-proline + NAD(+) = (S)-1-pyrroline-5-carboxylate + NADH + 2 H(+). It participates in amino-acid biosynthesis; L-proline biosynthesis; L-proline from L-glutamate 5-semialdehyde: step 1/1. Functionally, catalyzes the reduction of 1-pyrroline-5-carboxylate (PCA) to L-proline. The chain is Pyrroline-5-carboxylate reductase 2 (proI) from Bacillus subtilis (strain 168).